The chain runs to 652 residues: Phosphomethylpyrimidine synthase (652 aa).

Residues Asn-235, Met-264, Tyr-293, His-329, 349-351, 390-393, and Glu-429 each bind substrate; these read SRG and DGMR. A Zn(2+)-binding site is contributed by His-433. Position 456 (Tyr-456) interacts with substrate. Residue His-497 participates in Zn(2+) binding. [4Fe-4S] cluster contacts are provided by Cys-577, Cys-580, and Cys-585.

It belongs to the ThiC family. Homodimer. It depends on [4Fe-4S] cluster as a cofactor.

It catalyses the reaction 5-amino-1-(5-phospho-beta-D-ribosyl)imidazole + S-adenosyl-L-methionine = 4-amino-2-methyl-5-(phosphooxymethyl)pyrimidine + CO + 5'-deoxyadenosine + formate + L-methionine + 3 H(+). It participates in cofactor biosynthesis; thiamine diphosphate biosynthesis. In terms of biological role, catalyzes the synthesis of the hydroxymethylpyrimidine phosphate (HMP-P) moiety of thiamine from aminoimidazole ribotide (AIR) in a radical S-adenosyl-L-methionine (SAM)-dependent reaction. The sequence is that of Phosphomethylpyrimidine synthase from Shewanella woodyi (strain ATCC 51908 / MS32).